The following is a 2896-amino-acid chain: Protein PRRC2C (2896 aa).

Position 27 is an N6-acetyllysine (Lys27). The segment at 28 to 212 is disordered; sequence GKSLETQKTT…STAGTSEQND (185 aa). The segment covering 88 to 97 has biased composition (basic and acidic residues); sequence QEQHEEEKTP. Low complexity predominate over residues 105 to 119; the sequence is KPGVAAPPEVAPAPK. Over residues 134–144 the composition is skewed to polar residues; it reads QVNSQFQQEFP. Basic and acidic residues predominate over residues 151–160; it reads DQEKKEKETN. Residues Ser187 and Ser191 each carry the phosphoserine modification. The span at 201–211 shows a compositional bias: polar residues; sequence DESTAGTSEQN. An Asymmetric dimethylarginine; alternate modification is found at Arg242. An Omega-N-methylarginine; alternate modification is found at Arg242. Arg255 and Arg266 each carry asymmetric dimethylarginine. Disordered stretches follow at residues 264–729 and 750–788; these read PMRF…QHLA and SGRP…SFEH. 2 positions are modified to omega-N-methylarginine: Arg279 and Arg281. Residues 301-310 show a composition bias toward basic and acidic residues; sequence ELKELDKFDN. Ser335 carries the post-translational modification Phosphoserine. A compositionally biased stretch (polar residues) spans 341–358; that stretch reads GSNSPKENNSEDQGSKAS. Residues 359–368 are compositionally biased toward basic and acidic residues; it reads ENNENKKETD. The span at 370–381 shows a compositional bias: polar residues; sequence VSNTKSSSQIPA. N6-acetyllysine is present on Lys392. A phosphoserine mark is found at Ser395 and Ser500. Over residues 395 to 405 the composition is skewed to polar residues; that stretch reads SFNQERGTSSH. Residues 465 to 648 are compositionally biased toward basic and acidic residues; it reads RREEEERRME…EATPVVHETE (184 aa). Low complexity predominate over residues 676–708; sequence QRQQEQMKQQQWQQQQQQGVLPQTVPSQPSSST. The span at 759–769 shows a compositional bias: pro residues; that stretch reads PIHPGMIPPKP. Phosphoserine occurs at positions 779, 785, and 801. The tract at residues 804–1118 is disordered; sequence RMLWGSDPYP…PVSTVQVEPA (315 aa). Composition is skewed to basic and acidic residues over residues 825-836, 852-867, and 878-888; these read ATEEPEDVRSEA, NQLE…RESS, and SVEDVRPHHTD. Phosphoserine is present on residues Ser867, Ser878, Ser920, and Ser929. Composition is skewed to basic and acidic residues over residues 954–993, 1000–1010, and 1020–1058; these read IDSK…ETRW, NRREEVNDRPV, and VLRD…KKDL. Residues 1020–1046 are a coiled coil; that stretch reads VLRDMKEEREQRKEKEGEKAEKVTEKV. The segment covering 1059–1081 has biased composition (pro residues); sequence PPPPPPPQPPAPIQPQSVPPPIQ. Residues 1089 to 1100 show a composition bias toward polar residues; it reads STETATLAQKPS. Lys1133 participates in a covalent cross-link: Glycyl lysine isopeptide (Lys-Gly) (interchain with G-Cter in SUMO2). Composition is skewed to basic and acidic residues over residues 1143 to 1163, 1170 to 1180, 1214 to 1230, and 1237 to 1248; these read SKDL…KKES, YWKEARERDWF, HTRD…RAEH, and RQREESETRSES. Disordered regions lie at residues 1143–1647, 1670–1785, 1905–1991, 2005–2164, 2218–2238, 2257–2290, 2317–2341, and 2668–2701; these read SKDL…DALS, EDPQ…SAPV, APAS…TAEL, ISKK…VSEM, LPNT…SLTS, WENS…GPST, GAGT…NICK, and DIKP…QSSK. Residues Ser1242, Ser1246, Ser1248, Ser1249, and Ser1263 each carry the phosphoserine modification. 4 stretches are compositionally biased toward basic and acidic residues: residues 1261–1297, 1305–1330, 1381–1418, and 1429–1446; these read RGSE…ENKK, FKPD…DKAK, EVPK…PARE, and PRQD…REAA. 2 positions are modified to phosphothreonine: Thr1265 and Thr1267. 2 stretches are compositionally biased toward polar residues: residues 1457 to 1469 and 1477 to 1491; these read TNGT…QEPV and GNKT…SSDQ. The segment covering 1505–1517 has biased composition (basic and acidic residues); that stretch reads FNERRERDEKKNA. Ser1544 is subject to Phosphoserine. Basic and acidic residues-rich tracts occupy residues 1620 to 1634 and 1692 to 1704; these read NSKD…DPKP and RLQD…KEEQ. A coiled-coil region spans residues 1682 to 1717; sequence TEVVSKKQQKRLQDEERRKKEEQVIQVWNKKNANEK. Residues 1742 to 1785 are compositionally biased toward low complexity; it reads SSASVPPLASAPLPPSTSASVPASTSAPLPATLTPVPASTSAPV. Over residues 1913–1929 the composition is skewed to pro residues; the sequence is APAPTPVSAPNPAPPAP. The span at 1943-1952 shows a compositional bias: low complexity; the sequence is PLQTTSQSSK. Thr1965 is modified (phosphothreonine). Over residues 1976 to 1986 the composition is skewed to polar residues; it reads KSIQTPQSHGT. Phosphoserine occurs at positions 1983 and 2013. Over residues 2019–2035 the composition is skewed to polar residues; it reads SVSAWNKPLTSFGSAPS. The segment covering 2075–2088 has biased composition (basic and acidic residues); that stretch reads KSADKIPEPKEQRQ. At Ser2105 the chain carries Phosphoserine. A compositionally biased stretch (basic and acidic residues) spans 2108-2132; the sequence is ENKEHKPGPIGKERSLKNRKVKDAQ. Ser2143 is modified (phosphoserine). Residues 2257 to 2267 show a composition bias toward basic and acidic residues; the sequence is WENSPNVREKG. Position 2260 is a phosphoserine (Ser2260). The span at 2269–2290 shows a compositional bias: polar residues; that stretch reads PVTSTAPPIATGVSSSASGPST. The segment covering 2320–2334 has biased composition (low complexity); the sequence is TYTTSSLSTKSTTTS. A phosphothreonine mark is found at Thr2673 and Thr2682. A compositionally biased stretch (polar residues) spans 2679 to 2701; it reads RSTTPTSSPFRATSTSPNSQSSK. Residues Ser2686 and Ser2694 each carry the phosphoserine modification. Omega-N-methylarginine is present on Arg2814. Asymmetric dimethylarginine; alternate is present on Arg2823. Arg2823 carries the omega-N-methylarginine; alternate modification. A compositionally biased stretch (polar residues) spans 2824-2833; the sequence is FFSEQQQSKQ. A disordered region spans residues 2824–2896; sequence FFSEQQQSKQ…QAIKTEETKS (73 aa).

As to expression, overexpressed in bladder cancer.

It is found in the cytoplasm. It localises to the stress granule. Functionally, required for efficient formation of stress granules. The sequence is that of Protein PRRC2C from Homo sapiens (Human).